A 475-amino-acid polypeptide reads, in one-letter code: Ankyrin repeat, SAM and basic leucine zipper domain-containing protein 1 (475 aa).

The tract at residues 1–25 (MAASALRGLPVAGGGESSESEDDGW) is disordered. Phosphoserine is present on residues Ser-17, Ser-18, and Ser-20. ANK repeat units lie at residues 45–74 (EKKEKFKKAMTIGDVSLVQELLDSGISVDS), 78–107 (YGWTPLMYAASVANAELVRVLLDRGANASF), 110–144 (DKQSILITACSAHGSEEQILKCVELLLSRNADPNV), 148–177 (RLMTPIMYAARDGHTQVVALLVAHGAEVNT), 181–210 (NGYTALTWAARQGHKNIVLKLLELGANKML), and 214–243 (DGKMPSEIAKRNKHHEIFNLLSFTLNPLEG). Residues 272–334 (SYTAFGDLEV…KILAALKELQ (63 aa)) enclose the SAM domain.

Interacts with DDX4, PIWIL1, RANBP9 and TDRD1.

It is found in the cytoplasm. In terms of biological role, plays a central role during spermatogenesis by repressing transposable elements and preventing their mobilization, which is essential for the germline integrity. Acts via the piRNA metabolic process, which mediates the repression of transposable elements during meiosis by forming complexes composed of piRNAs and Piwi proteins and governs the methylation and subsequent repression of transposons. Its association with pi-bodies suggests a participation in the primary piRNAs metabolic process. Required prior to the pachytene stage to facilitate the production of multiple types of piRNAs, including those associated with repeats involved in the regulation of retrotransposons. May act by mediating protein-protein interactions during germ cell maturation. This is Ankyrin repeat, SAM and basic leucine zipper domain-containing protein 1 (ASZ1) from Pan troglodytes (Chimpanzee).